The following is a 434-amino-acid chain: Zinc finger CCCH domain-containing protein 10 (434 aa).

Residues 1-37 (MPDRDSYANGTGSSGGGPGGGGSEEASGAGVGSGGAS) are disordered. Residues 12–35 (GSSGGGPGGGGSEEASGAGVGSGG) are compositionally biased toward gly residues. C3H1-type zinc fingers lie at residues 36–63 (ASSD…HPDM), 73–99 (KNEF…HGSK), and 134–161 (KEEV…HLQR). Arginine 185 and arginine 186 each carry omega-N-methylarginine. Over residues 196 to 207 (PDRGFEDHEPGP) the composition is skewed to basic and acidic residues. Residues 196 to 217 (PDRGFEDHEPGPKRRRGGCCPP) form a disordered region. A coiled-coil region spans residues 234–280 (GVECRLLEEENAMLRKRVEELKKQVSNLLATNEVLLEQNAQFRNQAK). Polar residues predominate over residues 314–330 (TTLSSQALQPRPVSQQE). Residues 314-362 (TTLSSQALQPRPVSQQELVAPAGAPAAPPTNAAPPAAPPPPPPHLTPEI) are disordered. A compositionally biased stretch (pro residues) spans 339-358 (AAPPTNAAPPAAPPPPPPHL).

Its subcellular location is the nucleus. Its function is as follows. Specific regulator of miRNA biogenesis. Binds, via the C3H1-type zinc finger domains, to the binding motif 5'-GCAGCGC-3' on microRNA pri-MIR143 and negatively regulates the processing to mature microRNA. The protein is Zinc finger CCCH domain-containing protein 10 (ZC3H10) of Homo sapiens (Human).